The primary structure comprises 340 residues: Cytochrome c peroxidase, mitochondrial (340 aa).

A mitochondrion-targeting transit peptide spans 1-17 (MRSFRAVRNFSTTAKRL). His-101 (proton acceptor) is an active-site residue. The segment at 175-198 (WKRGRVDEPESASPPDGSLPDASQ) is disordered. His-224 provides a ligand contact to heme b. The active-site Tryptophan radical intermediate is the Trp-240.

It belongs to the peroxidase family. Cytochrome c peroxidase subfamily. In terms of assembly, forms a one-to-one complex with cytochrome c. It depends on heme b as a cofactor.

The protein localises to the mitochondrion matrix. It is found in the mitochondrion intermembrane space. It catalyses the reaction 2 Fe(II)-[cytochrome c] + H2O2 + 2 H(+) = 2 Fe(III)-[cytochrome c] + 2 H2O. Functionally, destroys radicals which are normally produced within the cells and which are toxic to biological systems. In Yarrowia lipolytica (strain CLIB 122 / E 150) (Yeast), this protein is Cytochrome c peroxidase, mitochondrial (CCP1).